A 288-amino-acid chain; its full sequence is MIGPISQINISGGLSEKETSSLISNEELKNIITQLETDISDGSWFHKNYSRMDVEVMPALVIQANNKYPEMNLNLVTSPLDLSIEIKNVIENGVRSSRFIINMGEGGIHFSVIDYKHINGKTSLILFEPANFNSMGPAMLAIRTKTAIERYQLPDCHFSMVEMDIQRSSSECGIFSLALAKKLYIERDSLLKIHEDNIKGILSDGENPLPHDKLDPYLPVTFYKHTQGKKRLNEYLNTNPQGVGTVVNKKNETIVNRFDNNKSIVDGKELSVSVHKKRIAEYKTLLKV.

Active-site residues include H109 and E128. H109 is a CoA binding site. 167-168 (RS) is a CoA binding site. C172 is an active-site residue. Residues 182 to 185 (KLYI) and 224 to 225 (KH) contribute to the 1D-myo-inositol hexakisphosphate site. 227–230 (QGKK) is a binding site for CoA. Position 257 (R257) interacts with 1D-myo-inositol hexakisphosphate. Residue 266–270 (DGKEL) coordinates CoA.

The protein belongs to the acetyltransferase YopJ family. 1D-myo-inositol hexakisphosphate is required as a cofactor.

Its subcellular location is the secreted. The catalysed reaction is L-threonyl-[protein] + acetyl-CoA = O-acetyl-L-threonyl-[protein] + CoA. It catalyses the reaction L-seryl-[protein] + acetyl-CoA = O-acetyl-L-seryl-[protein] + CoA. With respect to regulation, 1D-myo-inositol hexakisphosphate activates protein-acetyltransferase activity via an allosteric mechanism: 1D-myo-inositol hexakisphosphate-binding induces a conformational rearrangement that stimulates the interaction with acetyl-CoA. Serine/threonine-protein acetyltransferase translocated into infected cells, which inhibits the host immune response and induces cell death by mediating acetylation of target proteins. Inhibits the MAPK and NF-kappa-B signaling pathways by acetylating protein-kinases such as MAP2K1, MAP2K6, MAP3K7/TAK1 and I-kappa-B kinase (CHUK/IKKA and IKBKB) on serine and threonine residues critical for their activation by phosphorylation, thereby preventing protein-kinase activation. Promotes pyroptosis, a programmed cell death, in host cells by mediating acetylation of MAP3K7/TAK1: MAP3K7/TAK1 inactivation triggers activation of caspase-8 (CASP8), followed by CASP8-dependent cleavage of gasdermin-D (GSDMD) and induction of pyroptosis. In Yersinia pestis, this protein is Serine/threonine-protein acetyltransferase YopJ.